We begin with the raw amino-acid sequence, 482 residues long: tRNA sulfurtransferase (482 aa).

The region spanning Leu61–Arg165 is the THUMP domain. ATP-binding positions include Leu183–Ile184, Lys265, Gly287, and Gln296. A disulfide bond links Cys344 and Cys456. Residues Phe404–Pro482 enclose the Rhodanese domain. The active-site Cysteine persulfide intermediate is Cys456.

The protein belongs to the ThiI family.

The protein resides in the cytoplasm. It carries out the reaction [ThiI sulfur-carrier protein]-S-sulfanyl-L-cysteine + a uridine in tRNA + 2 reduced [2Fe-2S]-[ferredoxin] + ATP + H(+) = [ThiI sulfur-carrier protein]-L-cysteine + a 4-thiouridine in tRNA + 2 oxidized [2Fe-2S]-[ferredoxin] + AMP + diphosphate. It catalyses the reaction [ThiS sulfur-carrier protein]-C-terminal Gly-Gly-AMP + S-sulfanyl-L-cysteinyl-[cysteine desulfurase] + AH2 = [ThiS sulfur-carrier protein]-C-terminal-Gly-aminoethanethioate + L-cysteinyl-[cysteine desulfurase] + A + AMP + 2 H(+). The protein operates within cofactor biosynthesis; thiamine diphosphate biosynthesis. Functionally, catalyzes the ATP-dependent transfer of a sulfur to tRNA to produce 4-thiouridine in position 8 of tRNAs, which functions as a near-UV photosensor. Also catalyzes the transfer of sulfur to the sulfur carrier protein ThiS, forming ThiS-thiocarboxylate. This is a step in the synthesis of thiazole, in the thiamine biosynthesis pathway. The sulfur is donated as persulfide by IscS. This Escherichia coli O8 (strain IAI1) protein is tRNA sulfurtransferase.